The chain runs to 651 residues: Intraflagellar transport protein 70A (651 aa).

TPR repeat units lie at residues 8 to 41, 42 to 75, 140 to 173, 175 to 207, 379 to 410, 411 to 443, and 445 to 478; these read DGEY…HTKS, RAAL…HPEV, PDYD…LGYQ, DLAY…GIRE, VTKQ…EKYI, PVLM…CNEH, and TWKL…HYEN. Residues 494 to 521 are a coiled coil; sequence YIMTSQNEEAEELMRKIEKEEEQISYDD. The stretch at 530–563 is one TPR 8 repeat; sequence CIVNLVIGTLYCAKGNYDFGISRVIKSLEPYNKK.

The protein belongs to the TTC30/dfy-1/fleer family. As to expression, localizes to the cilia of many ciliated epithelial cell types including pronephric cells, olfactory placode, the brain ventricle and lateral line organs.

Its subcellular location is the cell projection. The protein resides in the cilium. Functionally, plays a role in anterograde intraflagellar transport (IFT), the process by which cilia precursors are transported from the base of the cilium to the site of their incorporation at the tip. Required for polyglutamylation of axonemal tubulin, which is a prerequisite for correct assembly of cilia and for normal cilia beat amplitude. Does not seem to be required for neuronal microtubule polyglutamylation. This is Intraflagellar transport protein 70A (ift70a) from Danio rerio (Zebrafish).